The primary structure comprises 88 residues: Small ribosomal subunit protein uS15 (88 aa).

It belongs to the universal ribosomal protein uS15 family. In terms of assembly, part of the 30S ribosomal subunit. Forms a bridge to the 50S subunit in the 70S ribosome, contacting the 23S rRNA.

Its function is as follows. One of the primary rRNA binding proteins, it binds directly to 16S rRNA where it helps nucleate assembly of the platform of the 30S subunit by binding and bridging several RNA helices of the 16S rRNA. Forms an intersubunit bridge (bridge B4) with the 23S rRNA of the 50S subunit in the ribosome. This is Small ribosomal subunit protein uS15 from Metamycoplasma arthritidis (strain 158L3-1) (Mycoplasma arthritidis).